A 260-amino-acid chain; its full sequence is Neuraminyllactose-binding hemagglutinin (260 aa).

The signal sequence occupies residues 1-27 (MKANNHFKDFAWKKCLLGASVVALLVG). The N-palmitoyl cysteine moiety is linked to residue Cys-28. The S-diacylglycerol cysteine moiety is linked to residue Cys-28.

The protein localises to the cell outer membrane. The sequence is that of Neuraminyllactose-binding hemagglutinin (hpaA) from Helicobacter pylori (strain ATCC 700392 / 26695) (Campylobacter pylori).